Consider the following 285-residue polypeptide: Elongation factor Ts (285 aa).

An involved in Mg(2+) ion dislocation from EF-Tu region spans residues 82–85 (TDFV).

The protein belongs to the EF-Ts family.

It localises to the cytoplasm. Associates with the EF-Tu.GDP complex and induces the exchange of GDP to GTP. It remains bound to the aminoacyl-tRNA.EF-Tu.GTP complex up to the GTP hydrolysis stage on the ribosome. This Yersinia pseudotuberculosis serotype O:1b (strain IP 31758) protein is Elongation factor Ts.